The chain runs to 349 residues: MNFFSNNFGTPCNVEFELDNCQNRKTIEVTQDKGKTEKLFVFIGNEPVSGKVSINIKEKTKKIEHTGIRVEFVGQIELFYDRGNHYEFTSLVRELAPAGELTENKTFSYDFSNVEKQYESYNGTNVRLRYFVRLTIGRSFASNIVKEYDIWVINFVKPPESNSNIKMEVGIEDCLHIEFEYNKSKYHLKDVIIGKIYFLLVRIKIKYMEIALIKRESTGSGPNVFNESETLTKFEIMDGAPVRGESIPVRLFLSVFDLTPTYRSVHNKFSVKYFLNLALVDEDDKKYFKQQEITLWRRGVTKPGLPGSTNNNNNNNTSNTNNTNTPQQKVTESQNEVPEPENNSSDESD.

The segment at 299–349 (GVTKPGLPGSTNNNNNNNTSNTNNTNTPQQKVTESQNEVPEPENNSSDESD) is disordered. Positions 308–325 (STNNNNNNNTSNTNNTNT) are enriched in low complexity. Positions 326–343 (PQQKVTESQNEVPEPENN) are enriched in polar residues.

Belongs to the VPS26 family. Component of a retromer subcomplex consisting of vps29, vps26 and vps35.

The protein localises to the membrane. Plays a role in vesicular protein sorting. Component of the membrane-associated retromer complex which is essential in endosome-to-Golgi retrograde transport. The vps29-vps26-vps35 subcomplex may be involved in cargo selection. The sequence is that of Vacuolar protein sorting-associated protein 26 (vps26) from Dictyostelium discoideum (Social amoeba).